A 602-amino-acid chain; its full sequence is UvrABC system protein C (602 aa).

The region spanning 15–92 (DLPGSYQMKD…IQKYQPYYNI (78 aa)) is the GIY-YIG domain. The region spanning 197 to 232 (GKAKASLTAKMERAAKNLQFERAAEIRDQLHYIEQT) is the UVR domain.

The protein belongs to the UvrC family. As to quaternary structure, interacts with UvrB in an incision complex.

The protein localises to the cytoplasm. Functionally, the UvrABC repair system catalyzes the recognition and processing of DNA lesions. UvrC both incises the 5' and 3' sides of the lesion. The N-terminal half is responsible for the 3' incision and the C-terminal half is responsible for the 5' incision. The polypeptide is UvrABC system protein C (Lacticaseibacillus casei (strain BL23) (Lactobacillus casei)).